The following is a 324-amino-acid chain: Beta-ketoacyl-[acyl-carrier-protein] synthase III (324 aa).

Cysteine 112 is an active-site residue. The tract at residues 181–202 (TDGSRGQNLTSGNNPLRSPFSD) is disordered. The segment covering 184 to 196 (SRGQNLTSGNNPL) has biased composition (polar residues). Residue histidine 249 is part of the active site. Residues 250–254 (QANRR) are ACP-binding. Asparagine 279 is an active-site residue.

The protein belongs to the thiolase-like superfamily. FabH family. Homodimer.

It is found in the cytoplasm. It catalyses the reaction malonyl-[ACP] + acetyl-CoA + H(+) = 3-oxobutanoyl-[ACP] + CO2 + CoA. Its pathway is lipid metabolism; fatty acid biosynthesis. In terms of biological role, catalyzes the condensation reaction of fatty acid synthesis by the addition to an acyl acceptor of two carbons from malonyl-ACP. Catalyzes the first condensation reaction which initiates fatty acid synthesis and may therefore play a role in governing the total rate of fatty acid production. Possesses both acetoacetyl-ACP synthase and acetyl transacylase activities. Its substrate specificity determines the biosynthesis of branched-chain and/or straight-chain of fatty acids. This chain is Beta-ketoacyl-[acyl-carrier-protein] synthase III, found in Streptococcus uberis (strain ATCC BAA-854 / 0140J).